The chain runs to 478 residues: MSVSTHHHHVVLFPFMSKGHIIPLLQFGRLLLRHHRKEPTITVTVFTTPKNQPFISDFLSDTPEIKVISLPFPENITGIPPGVENTEKLPSMSLFVPFTRATKLLQPFFEETLKTLPKVSFMVSDGFLWWTSESAAKFNIPRFVSYGMNSYSAAVSISVFKHELFTEPESKSDTEPVTVPDFPWIKVKKCDFDHGTTEPEESGAALELSMDQIKSTTTSHGFLVNSFYELESAFVDYNNNSGDKPKSWCVGPLCLTDPPKQGSAKPAWIHWLDQKREEGRPVLYVAFGTQAEISNKQLMELAFGLEDSKVNFLWVTRKDVEEIIGEGFNDRIRESGMIVRDWVDQWEILSHESVKGFLSHCGWNSAQESICVGVPLLAWPMMAEQPLNAKMVVEEIKVGVRVETEDGSVKGFVTREELSGKIKELMEGETGKTARKNVKEYSKMAKAALVEGTGSSWKNLDMILKELCKSRDSNGASE.

UDP-alpha-D-glucose-binding positions include Thr-289, Val-343 to Gln-345, His-360 to Glu-368, and Met-382 to Gln-385.

This sequence belongs to the UDP-glycosyltransferase family.

In Arabidopsis thaliana (Mouse-ear cress), this protein is UDP-glycosyltransferase 90A1 (UGT90A1).